Reading from the N-terminus, the 328-residue chain is DNA-directed RNA polymerase subunit alpha (328 aa).

Positions 1–231 (MIYQMQMPER…EHVSLFANFS (231 aa)) are alpha N-terminal domain (alpha-NTD). Positions 252 to 328 (MRKLLQTRIE…MDITKYQMKS (77 aa)) are alpha C-terminal domain (alpha-CTD).

Belongs to the RNA polymerase alpha chain family. Homodimer. The RNAP catalytic core consists of 2 alpha, 1 beta, 1 beta' and 1 omega subunit. When a sigma factor is associated with the core the holoenzyme is formed, which can initiate transcription.

The catalysed reaction is RNA(n) + a ribonucleoside 5'-triphosphate = RNA(n+1) + diphosphate. Functionally, DNA-dependent RNA polymerase catalyzes the transcription of DNA into RNA using the four ribonucleoside triphosphates as substrates. This Prosthecochloris aestuarii (strain DSM 271 / SK 413) protein is DNA-directed RNA polymerase subunit alpha.